Reading from the N-terminus, the 331-residue chain is Protein REVEILLE 6 (331 aa).

Residues 67 to 121 (TITKSRESWTEPEHDKFLEALQLFDRDWKKIEAFIGSKTVIQIRSHAQKYFLKVQ) form the HTH myb-type domain. The H-T-H motif DNA-binding region spans 94–117 (WKKIEAFIGSKTVIQIRSHAQKYF). 3 disordered regions span residues 122–166 (KSGT…EPND), 203–237 (LPKAGAGANNNCSSSSENTPRPRSNRDARDHGNVG), and 309–331 (SETATDHGGVNKTLNKDPPEIST). The span at 150-165 (VQLQVPGSFKSTSEPN) shows a compositional bias: polar residues. Over residues 211–220 (NNNCSSSSEN) the composition is skewed to low complexity. 2 stretches are compositionally biased toward basic and acidic residues: residues 226–235 (SNRDARDHGN) and 322–331 (LNKDPPEIST).

The protein resides in the nucleus. Functionally, probable transcription factor. RVE4, RVE6 and RVE8 are components of the circadian system acting synergistically to regulate flowering time, redundantly to regulate leaf growth, and antagonistically to regulate hypocotyl elongation; their action seems independent of ZTL and HY5. The chain is Protein REVEILLE 6 from Arabidopsis thaliana (Mouse-ear cress).